A 124-amino-acid polypeptide reads, in one-letter code: Glycine cleavage system H protein (124 aa).

The Lipoyl-binding domain maps to 19–101; sequence VATVGITDHA…ESGAWFFRMT (83 aa). Position 60 is an N6-lipoyllysine (Lys-60).

This sequence belongs to the GcvH family. As to quaternary structure, the glycine cleavage system is composed of four proteins: P, T, L and H. The cofactor is (R)-lipoate.

Its function is as follows. The glycine cleavage system catalyzes the degradation of glycine. The H protein shuttles the methylamine group of glycine from the P protein to the T protein. This is Glycine cleavage system H protein from Acidiphilium cryptum (strain JF-5).